A 261-amino-acid polypeptide reads, in one-letter code: Cytochrome c oxidase subunit 3 (261 aa).

At Met-1–Pro-15 the chain is on the mitochondrial matrix side. The chain crosses the membrane as a helical span at residues Trp-16–Trp-34. Residues Phe-35–Thr-40 lie on the Mitochondrial intermembrane side of the membrane. A helical transmembrane segment spans residues Ile-41–Thr-66. At Phe-67–Thr-72 the chain is on the mitochondrial matrix side. Residues Pro-73–Ser-105 traverse the membrane as a helical segment. Residues Leu-106 to Glu-128 are Mitochondrial intermembrane-facing. A helical transmembrane segment spans residues Val-129–Met-152. Topologically, residues Glu-153–Asn-155 are mitochondrial matrix. Residues Arg-156 to Glu-183 traverse the membrane as a helical segment. Topologically, residues Ala-184–Asp-190 are mitochondrial intermembrane. A helical transmembrane segment spans residues Gly-191–Leu-223. Residues Lys-224–His-232 are Mitochondrial matrix-facing. The helical transmembrane segment at Phe-233 to Ile-256 threads the bilayer. Residues Tyr-257 to Ser-261 are Mitochondrial intermembrane-facing.

Belongs to the cytochrome c oxidase subunit 3 family. In terms of assembly, component of the cytochrome c oxidase (complex IV, CIV), a multisubunit enzyme composed of 14 subunits. The complex is composed of a catalytic core of 3 subunits MT-CO1, MT-CO2 and MT-CO3, encoded in the mitochondrial DNA, and 11 supernumerary subunits COX4I, COX5A, COX5B, COX6A, COX6B, COX6C, COX7A, COX7B, COX7C, COX8 and NDUFA4, which are encoded in the nuclear genome. The complex exists as a monomer or a dimer and forms supercomplexes (SCs) in the inner mitochondrial membrane with NADH-ubiquinone oxidoreductase (complex I, CI) and ubiquinol-cytochrome c oxidoreductase (cytochrome b-c1 complex, complex III, CIII), resulting in different assemblies (supercomplex SCI(1)III(2)IV(1) and megacomplex MCI(2)III(2)IV(2)).

Its subcellular location is the mitochondrion inner membrane. It carries out the reaction 4 Fe(II)-[cytochrome c] + O2 + 8 H(+)(in) = 4 Fe(III)-[cytochrome c] + 2 H2O + 4 H(+)(out). In terms of biological role, component of the cytochrome c oxidase, the last enzyme in the mitochondrial electron transport chain which drives oxidative phosphorylation. The respiratory chain contains 3 multisubunit complexes succinate dehydrogenase (complex II, CII), ubiquinol-cytochrome c oxidoreductase (cytochrome b-c1 complex, complex III, CIII) and cytochrome c oxidase (complex IV, CIV), that cooperate to transfer electrons derived from NADH and succinate to molecular oxygen, creating an electrochemical gradient over the inner membrane that drives transmembrane transport and the ATP synthase. Cytochrome c oxidase is the component of the respiratory chain that catalyzes the reduction of oxygen to water. Electrons originating from reduced cytochrome c in the intermembrane space (IMS) are transferred via the dinuclear copper A center (CU(A)) of subunit 2 and heme A of subunit 1 to the active site in subunit 1, a binuclear center (BNC) formed by heme A3 and copper B (CU(B)). The BNC reduces molecular oxygen to 2 water molecules using 4 electrons from cytochrome c in the IMS and 4 protons from the mitochondrial matrix. The polypeptide is Cytochrome c oxidase subunit 3 (MT-CO3) (Raphicerus melanotis (Cape grysbok)).